A 476-amino-acid polypeptide reads, in one-letter code: MKPILPDYNSAGVLIIGDVMLDRYWYGPTGRISPEAPVPVVKVENNEERPGGAANVAMNIASLGGHAHIVGLTGEDEPAKVLTETLSALNVKCDFVALPDYPTITKLRVMSRGQQLIRLDFEDKFENTDATPVLSRMDAALPNVKAVIMSDYAKGSLEHVQAYIQKARAANIPVFIDPKGADFERYRGATLLTPNMKEFEDVVGKVKSDQELVEKALALVKEFDFEALLVTRSEHGMTLIRRGQEPFHLPTQAKEVYDVTGAGDTVISVLAASVAAGKSFEEACALANAAAGVVVGKLGTSTLSEIELAEAVHGSQDTDFGVISEKALIEAVKKARARGEKVVMTNGCFDILHAGHVSYLNHAAELGDRLIVAVNTDESVKRLKGPGRPVNPTDRRMAVLAGLGAVDWVVPFSEDTPQRLISEVLPSMLVKGGDYKPEEIAGGKEVIAAGGEVRVLNFEDGCSTSEIINAIKGGKG.

The tract at residues 1–318 is ribokinase; the sequence is MKPILPDYNS…AEAVHGSQDT (318 aa). An ATP-binding site is contributed by 195-198; sequence NMKE. D264 is an active-site residue. Positions 344–476 are cytidylyltransferase; it reads MTNGCFDILH…IINAIKGGKG (133 aa).

This sequence in the N-terminal section; belongs to the carbohydrate kinase PfkB family. It in the C-terminal section; belongs to the cytidylyltransferase family. As to quaternary structure, homodimer.

It carries out the reaction D-glycero-beta-D-manno-heptose 7-phosphate + ATP = D-glycero-beta-D-manno-heptose 1,7-bisphosphate + ADP + H(+). The enzyme catalyses D-glycero-beta-D-manno-heptose 1-phosphate + ATP + H(+) = ADP-D-glycero-beta-D-manno-heptose + diphosphate. It participates in nucleotide-sugar biosynthesis; ADP-L-glycero-beta-D-manno-heptose biosynthesis; ADP-L-glycero-beta-D-manno-heptose from D-glycero-beta-D-manno-heptose 7-phosphate: step 1/4. The protein operates within nucleotide-sugar biosynthesis; ADP-L-glycero-beta-D-manno-heptose biosynthesis; ADP-L-glycero-beta-D-manno-heptose from D-glycero-beta-D-manno-heptose 7-phosphate: step 3/4. It functions in the pathway bacterial outer membrane biogenesis; LPS core biosynthesis. Catalyzes the phosphorylation of D-glycero-D-manno-heptose 7-phosphate at the C-1 position to selectively form D-glycero-beta-D-manno-heptose-1,7-bisphosphate. Its function is as follows. Catalyzes the ADP transfer from ATP to D-glycero-beta-D-manno-heptose 1-phosphate, yielding ADP-D-glycero-beta-D-manno-heptose. This chain is Bifunctional protein HldE, found in Vibrio parahaemolyticus serotype O3:K6 (strain RIMD 2210633).